Reading from the N-terminus, the 281-residue chain is NADPH-dependent 7-cyano-7-deazaguanine reductase (281 aa).

87–89 provides a ligand contact to substrate; the sequence is IES. NADPH is bound at residue 89–90; that stretch reads SK. Cys-188 serves as the catalytic Thioimide intermediate. Asp-195 (proton donor) is an active-site residue. Substrate is bound at residue 227-228; it reads HE. Residue 256–257 coordinates NADPH; that stretch reads RG. The segment at 261-281 is disordered; that stretch reads INPYRSTEQDKPAHNNRMARQ.

Belongs to the GTP cyclohydrolase I family. QueF type 2 subfamily. In terms of assembly, homodimer.

The protein localises to the cytoplasm. It catalyses the reaction 7-aminomethyl-7-carbaguanine + 2 NADP(+) = 7-cyano-7-deazaguanine + 2 NADPH + 3 H(+). Its pathway is tRNA modification; tRNA-queuosine biosynthesis. Functionally, catalyzes the NADPH-dependent reduction of 7-cyano-7-deazaguanine (preQ0) to 7-aminomethyl-7-deazaguanine (preQ1). This is NADPH-dependent 7-cyano-7-deazaguanine reductase from Vibrio campbellii (strain ATCC BAA-1116).